The following is a 910-amino-acid chain: Importin subunit beta-2 (910 aa).

HEAT repeat units lie at residues 12 to 39 (VLVE…NLLE), 44 to 82 (IPDL…VSSL), 93 to 126 (YTKS…RWGI), 132 to 169 (VLPQ…LDRD), 177 to 207 (DFMI…QFVL), 220 to 247 (FLET…VYLL), 259 to 286 (GSIV…FWLA), 302 to 406 (DKIV…LSSF), 414 to 442 (IILP…GAIA), 454 to 481 (PELY…TLGR), 499 to 532 (FVPL…EEQA), 540 to 573 (LEPI…ADYV), 581 to 619 (RYIE…VALR), 627 to 677 (AETY…ALGS), 690 to 721 (LGQI…MYCF), 729 to 764 (DALL…LQLG), 772 to 807 (KPLL…VYNP), 815 to 848 (ELFY…LACN), and 857 to 888 (PMFV…VELF). Residues 34–122 (ALNLLEKAKD…SGNVITTIIS (89 aa)) form the Importin N-terminal domain. Residues 333 to 381 (DREEDIRPQHAKGKSRITLNTQGPITQQGSSNADADELEDEDEDDDEFD) form a disordered region. The segment covering 349–364 (ITLNTQGPITQQGSSN) has biased composition (polar residues). Over residues 366–381 (DADELEDEDEDDDEFD) the composition is skewed to acidic residues.

This sequence belongs to the importin beta family. Importin beta-2 subfamily. In terms of assembly, interacts with Ran; interacts specifically with the GTP-bound form of Ran (GTP-Ran), protecting it from GTP hydrolysis and nucleotide exchange. Interacts with nucleoporins.

Its subcellular location is the cytoplasm. The protein resides in the nucleus envelope. Functions in nuclear protein import as nuclear transport receptor. Serves as receptor for arginine/glycine-rich nuclear localization signals (rg-NLS) and PY-NLS in cargo substrates. Its predominant cargo substrate seems to be mRNA-binding proteins. Mediates docking of the importin/substrate complex to the nuclear pore complex (NPC) through binding to repeat-containing nucleoporins. The complex is subsequently translocated through the pore by an energy requiring, Ran-dependent mechanism. At the nucleoplasmic side of the NPC, GTP-Ran binding leads to release of the cargo. The importin is re-exported from the nucleus to the cytoplasm where GTP hydrolysis releases Ran from importin. The directionality of nuclear import is thought to be conferred by an asymmetric distribution of the GTP- and GDP-bound forms of Ran between the cytoplasm and nucleus. The chain is Importin subunit beta-2 from Schizosaccharomyces pombe (strain 972 / ATCC 24843) (Fission yeast).